The chain runs to 379 residues: Succinyl-diaminopimelate desuccinylase (379 aa).

Residue His68 coordinates Zn(2+). Asp70 is a catalytic residue. Residue Asp101 coordinates Zn(2+). The active-site Proton acceptor is the Glu134. Zn(2+) contacts are provided by Glu135, Glu163, and His352.

Belongs to the peptidase M20A family. DapE subfamily. As to quaternary structure, homodimer. Zn(2+) is required as a cofactor. Requires Co(2+) as cofactor.

The enzyme catalyses N-succinyl-(2S,6S)-2,6-diaminopimelate + H2O = (2S,6S)-2,6-diaminopimelate + succinate. It functions in the pathway amino-acid biosynthesis; L-lysine biosynthesis via DAP pathway; LL-2,6-diaminopimelate from (S)-tetrahydrodipicolinate (succinylase route): step 3/3. In terms of biological role, catalyzes the hydrolysis of N-succinyl-L,L-diaminopimelic acid (SDAP), forming succinate and LL-2,6-diaminopimelate (DAP), an intermediate involved in the bacterial biosynthesis of lysine and meso-diaminopimelic acid, an essential component of bacterial cell walls. This chain is Succinyl-diaminopimelate desuccinylase, found in Dinoroseobacter shibae (strain DSM 16493 / NCIMB 14021 / DFL 12).